Consider the following 369-residue polypeptide: 3-dehydroquinate synthase (369 aa).

NAD(+) contacts are provided by residues 78 to 83, 112 to 116, 136 to 137, K149, K158, and 176 to 179; these read DGERYK, GVIGD, TT, and TLTT. E191, H254, and H271 together coordinate Zn(2+).

The protein belongs to the sugar phosphate cyclases superfamily. Dehydroquinate synthase family. It depends on NAD(+) as a cofactor. Co(2+) serves as cofactor. The cofactor is Zn(2+).

It localises to the cytoplasm. The catalysed reaction is 7-phospho-2-dehydro-3-deoxy-D-arabino-heptonate = 3-dehydroquinate + phosphate. Its pathway is metabolic intermediate biosynthesis; chorismate biosynthesis; chorismate from D-erythrose 4-phosphate and phosphoenolpyruvate: step 2/7. Its function is as follows. Catalyzes the conversion of 3-deoxy-D-arabino-heptulosonate 7-phosphate (DAHP) to dehydroquinate (DHQ). The chain is 3-dehydroquinate synthase from Nitrosomonas europaea (strain ATCC 19718 / CIP 103999 / KCTC 2705 / NBRC 14298).